The sequence spans 245 residues: Ribosomal RNA small subunit methyltransferase G (245 aa).

Residues Gly79, Phe84, 130 to 131 (AE), and Arg150 each bind S-adenosyl-L-methionine.

Belongs to the methyltransferase superfamily. RNA methyltransferase RsmG family.

The protein localises to the cytoplasm. In terms of biological role, specifically methylates the N7 position of a guanine in 16S rRNA. The polypeptide is Ribosomal RNA small subunit methyltransferase G (Limosilactobacillus fermentum (strain NBRC 3956 / LMG 18251) (Lactobacillus fermentum)).